The chain runs to 152 residues: Transcriptional regulator MraZ (152 aa).

SpoVT-AbrB domains follow at residues 5 to 52 (ASAI…PLDE) and 81 to 124 (AHEC…DETA).

Belongs to the MraZ family. Forms oligomers.

It is found in the cytoplasm. The protein localises to the nucleoid. The polypeptide is Transcriptional regulator MraZ (Shewanella woodyi (strain ATCC 51908 / MS32)).